The primary structure comprises 363 residues: 3-isopropylmalate dehydrogenase (363 aa).

77–90 (GPKWQHLPPDQQPE) contacts NAD(+). Substrate is bound by residues Arg-98, Arg-108, Arg-137, and Asp-226. Residues Asp-226, Asp-250, and Asp-254 each contribute to the Mg(2+) site. 284-296 (GSAPDIAGKNIAN) serves as a coordination point for NAD(+).

This sequence belongs to the isocitrate and isopropylmalate dehydrogenases family. LeuB type 1 subfamily. As to quaternary structure, homodimer. It depends on Mg(2+) as a cofactor. Mn(2+) serves as cofactor.

The protein resides in the cytoplasm. It carries out the reaction (2R,3S)-3-isopropylmalate + NAD(+) = 4-methyl-2-oxopentanoate + CO2 + NADH. It participates in amino-acid biosynthesis; L-leucine biosynthesis; L-leucine from 3-methyl-2-oxobutanoate: step 3/4. Catalyzes the oxidation of 3-carboxy-2-hydroxy-4-methylpentanoate (3-isopropylmalate) to 3-carboxy-4-methyl-2-oxopentanoate. The product decarboxylates to 4-methyl-2 oxopentanoate. In Buchnera aphidicola subsp. Pemphigus spyrothecae, this protein is 3-isopropylmalate dehydrogenase.